Reading from the N-terminus, the 155-residue chain is Endoribonuclease YbeY (155 aa).

Residues histidine 120, histidine 124, and histidine 130 each contribute to the Zn(2+) site.

The protein belongs to the endoribonuclease YbeY family. Zn(2+) serves as cofactor.

It is found in the cytoplasm. In terms of biological role, single strand-specific metallo-endoribonuclease involved in late-stage 70S ribosome quality control and in maturation of the 3' terminus of the 16S rRNA. The sequence is that of Endoribonuclease YbeY from Staphylococcus aureus (strain MSSA476).